The following is a 263-amino-acid chain: Auxin-responsive protein IAA3 (263 aa).

Disordered regions lie at residues 1–54 and 76–121; these read MSPP…RRPA and RVFP…PAAK. Basic and acidic residues predominate over residues 28–38; that stretch reads RADDVDLKGTE. The short motif at 39-43 is the EAR-like (transcriptional repression) element; that stretch reads LRLGL. Residues 158-245 enclose the PB1 domain; sequence FLYVKVSMDG…SCRRLRIMKG (88 aa).

This sequence belongs to the Aux/IAA family. As to quaternary structure, homodimers and heterodimers. Highly expressed in flowers. Expressed in roots and shoots.

It localises to the nucleus. Its function is as follows. Aux/IAA proteins are short-lived transcriptional factors that function as repressors of early auxin response genes at low auxin concentrations. This chain is Auxin-responsive protein IAA3 (IAA3), found in Oryza sativa subsp. japonica (Rice).